The chain runs to 323 residues: tRNA dimethylallyltransferase (323 aa).

ATP is bound at residue 12-19 (GPTAAGKT). 14–19 (TAAGKT) is a binding site for substrate. 2 interaction with substrate tRNA regions span residues 37–40 (DSAL) and 161–165 (QRLIR).

This sequence belongs to the IPP transferase family. In terms of assembly, monomer. It depends on Mg(2+) as a cofactor.

The enzyme catalyses adenosine(37) in tRNA + dimethylallyl diphosphate = N(6)-dimethylallyladenosine(37) in tRNA + diphosphate. Functionally, catalyzes the transfer of a dimethylallyl group onto the adenine at position 37 in tRNAs that read codons beginning with uridine, leading to the formation of N6-(dimethylallyl)adenosine (i(6)A). The sequence is that of tRNA dimethylallyltransferase from Pseudomonas syringae pv. tomato (strain ATCC BAA-871 / DC3000).